Reading from the N-terminus, the 473-residue chain is MSAKTLYEKLVESHTIRELDNEGHVLLYIDRSILNEYTSPQAFSGLRERGRAVRHPDTFLLNIDHVNPTRSQRDVLMTDPGGQLQVDYFRENAADFGITLFDVLDPRQGIEHVVAHEQGLVMPGMVIAAGDSHTTTYGAFGALGFGIGTSEIEHLLATQTLVYRKLKTMRVSVQGELPFACSAKDIVLELLERIGADGATGYAIEFVGEAISALSVEGRMTLCNMAVEAGARGAIIAPDKKVFDYIYGKPQMPVGELWQQALLEWSQLSSDADAVFDKTVAINCHDLEPKVTWGISPDQTGSITGRVPFPEQETNPLKRLALEKALHYMGLTAGMLLKDIRISHAFIGSCTNGRIEDLRAVAKVLEGRKIASHVRGIIVPGSTMVRRQAEEEGLAKIFIAAGFEWRQSGCSMCLAMNEDVLSPGDRCASGTNRNFLGRQGAGARTHLMSPAMVAAAAVAGHLVDVRSLLQAGE.

Residues cysteine 350, cysteine 410, and cysteine 413 each contribute to the [4Fe-4S] cluster site.

The protein belongs to the aconitase/IPM isomerase family. LeuC type 1 subfamily. As to quaternary structure, heterodimer of LeuC and LeuD. [4Fe-4S] cluster serves as cofactor.

The enzyme catalyses (2R,3S)-3-isopropylmalate = (2S)-2-isopropylmalate. Its pathway is amino-acid biosynthesis; L-leucine biosynthesis; L-leucine from 3-methyl-2-oxobutanoate: step 2/4. In terms of biological role, catalyzes the isomerization between 2-isopropylmalate and 3-isopropylmalate, via the formation of 2-isopropylmaleate. The chain is 3-isopropylmalate dehydratase large subunit 2 from Salmonella choleraesuis (strain SC-B67).